The sequence spans 930 residues: MLKLLLGDPNARKLKKYQPYITEINLLEEDIKVLSDEDLKGKTAEFKQRLAKGETLDDILPEAFAVVREAGRRVLGLRHFDVQMLGGVILHSGQIAEMKTGEGKTLVATLPSYLNALTGKGVHVITVNDYLARRDAEWMGQVHRFLGLSVGLIQSSMTPSERQKNYECDITYVTNSEVGFDYLRDNMATSMADVVQRPFNYCVIDEVDSILVDEARTPLIISGQVERPTEKYVQAAEIALTLQKDEHYEVDEKARNVLLTDEGFAQAEELLGVTDLFDPEDPWAHFVFNAIKAKELFLKDVNYIVRNGEVVIVDEFTGRVLPGRRWSDGLHQAIEAKEHVDIQPETQTLATITYQNLFLLYPKLGGMTGTAKTEEAEFERIYKLEVTIIPTNRIRRREDLSDLVFKKEIGKWQAIARECAEMHELGRPVLVGTTSVEKSEYLSQLLREQGIPHELLNARPENVEREAEIVAQAGRRGAVTIATNMAGRGTDIILGGNSEYMARLKLREYFMPRIVRPDDEDVFGVQRAAGLPTGHGAGQGFVPGKKVKTWKASPEIFPTQLSKEAEQLLKEAVDFAVREYGDRSLPELEAEDKVAVAAEKAPTNDPVIQKLRDAYKRIKQEYEEFTSTEHDEVVSRGGLHVIGTERHESRRIDNQLRGRAGRQGDPGSTRFFLSLEDNLLRIFGGDRVAGLMEAFNVEDDMPIESGMLTRSLEGAQRKVETYYYDIRKQVFEYDEVMNNQRRAIYAERRRVLEGQDLKEQVIKYAEKTMDEIVDYYINVDLPSEEWELDKLVDKVKEFVYLLSDMQASQLEDMGVSEIKAFLHEQVRIAYDLKEAQIDQIQPGLMRQAERFFILQRIDTLWREHLQQMDALRESVGLRGYGQKDPLIEYKSEGYELFLDMMVNIRRDVVYSLFMFQPQPQPVVQTSSEMV.

ATP is bound by residues Q83, 101 to 105 (GEGKT), and D491.

It belongs to the SecA family. Monomer and homodimer. Part of the essential Sec protein translocation apparatus which comprises SecA, SecYEG and auxiliary proteins SecDF. Other proteins may also be involved.

It localises to the cell inner membrane. The protein localises to the cellular thylakoid membrane. It is found in the cytoplasm. It carries out the reaction ATP + H2O + cellular proteinSide 1 = ADP + phosphate + cellular proteinSide 2.. Part of the Sec protein translocase complex. Interacts with the SecYEG preprotein conducting channel. Has a central role in coupling the hydrolysis of ATP to the transfer of proteins into and across the cell membrane, serving as an ATP-driven molecular motor driving the stepwise translocation of polypeptide chains across the membrane. Its function is as follows. Probably participates in protein translocation into and across both the cytoplasmic and thylakoid membranes in cyanobacterial cells. The protein is Protein translocase subunit SecA of Trichormus variabilis (strain ATCC 29413 / PCC 7937) (Anabaena variabilis).